The sequence spans 558 residues: Cytochrome P450 monooxygenase grgG (558 aa).

Residues 11–31 traverse the membrane as a helical segment; it reads PASFIYFPLLILVGHALIFIL. Cysteine 470 is a heme binding site.

It belongs to the cytochrome P450 family. It depends on heme as a cofactor.

The protein localises to the membrane. Its pathway is secondary metabolite biosynthesis. Functionally, cytochrome P450 monooxygenase; part of the gene cluster that mediates the biosynthesis of gregatin A, a fungal polyketide featuring an alkylated furanone core. The PKS grgA synthesizes C11 and C4 polyketide chains in the presence and absence of the trans-enoyl reductase grgB, respectively. The polyketide transferase grgF is then responsible for the fusion of the two carbon chains to produce the furanone skeleton of gregatin A. Next, the cytochrome P450 monooxygenase grgG performs the oxidative cyclization to furnish the gregatin scaffold and leads to the formation of desmethylgregatin A. In this transformation, grgG initially abstracts a hydrogen atom from C-8 to generate a substrate radical, from which one electron is transferred to the iron-heme center to yield a carbocationic species. Heterocyclization along with double-bond isomerizations provides desmethylgregatin A with the furanone ring. Alternatively, grgG might provide hydroxylation at the C-8 radical, which is followed by dehydration to give the cyclized desmethylgregatin A. Finally, the O-methyltransferase grgD methylates the carboxyl group of desmethylgregatin A to provide gregatin A. In Penicillium sp, this protein is Cytochrome P450 monooxygenase grgG (grgG).